The sequence spans 328 residues: RNA-binding protein KhpB (328 aa).

A jag_N domain region spans residues 3–53 (VFTGSTVEEAIQKGLKELDIPRMKAHIKVISREKKGFLGLFGKKPAQVDIE). The linker stretch occupies residues 54–180 (AISETTVVKA…GLKVETNFDI (127 aa)). T89 bears the Phosphothreonine mark. The region spanning 181 to 258 (EQVATEVMAY…SRTFYVTINV (78 aa)) is the KH domain. Residues 263 to 328 (EHRAEVLQTY…PNRYVVVDTE (66 aa)) form the R3H domain.

This sequence belongs to the KhpB RNA-binding protein family. Interacts with KhpA; the 2 proteins colocalize throughout the cell cycle, with some increase at midcell in dividing cells. Interacts with StkP which phosphorylates it, interacts with MltG, MreC, RodZ and YidC2. Post-translationally, phosphorylated on Thr-89 by StkP; there is another poorly phosphorylated residue in the protein. Dephosphorylated by PhpP.

It is found in the cytoplasm. In terms of biological role, a probable RNA chaperone. Forms a complex with KhpA which binds to cellular RNA and controls its expression. Plays a role in peptidoglycan (PG) homeostasis and cell length regulation. Forms a complex with KhpA which presumably binds to about 170 cellular RNAs (mRNA, tRNA intergenic RNA and sRNAs); the proteins alone each bind the same set of RNAs. Suppresses the requirement for PBP2b (penA, a transpeptidase) in peripheral peptidoglycan (PG) synthesis. May function as a pleiotropic RNA chaperone controlling pneumococcal cell division, including PG homeostasis and regulating peripheral PG synthesis by the elongasome. This chain is RNA-binding protein KhpB, found in Streptococcus pneumoniae serotype 2 (strain D39 / NCTC 7466).